We begin with the raw amino-acid sequence, 324 residues long: Galactosylgalactosylxylosylprotein 3-beta-glucuronosyltransferase 2 (324 aa).

Residues 1–2 (MK) are Cytoplasmic-facing. The helical; Signal-anchor for type II membrane protein transmembrane segment at 3–23 (SALCSRFFILLPWILIVIIML) threads the bilayer. Residues 24 to 324 (DVDPRRPAPQ…YHLDTVNIEV (301 aa)) are Lumenal-facing. Positions 50–78 (SRVPLRRSSPGRDAAEKRNESRPQLQPEP) are disordered. N-linked (GlcNAc...) asparagine glycosylation occurs at N68. Residues 88–90 (PTY), D119, R156, R161, and 186–188 (DDD) each bind UDP-alpha-D-glucuronate. Residue D188 participates in Mn(2+) binding. Residues 235-244 (WREDRPFAID) form an interaction with galactose moiety of substrate glycoprotein region. E274 (proton donor/acceptor) is an active-site residue. The N-linked (GlcNAc...) asparagine glycan is linked to N293. Residue 301–303 (HTR) coordinates UDP-alpha-D-glucuronate.

This sequence belongs to the glycosyltransferase 43 family. In terms of assembly, homodimer. The cofactor is Mn(2+). In terms of tissue distribution, expressed in brain, but not in liver and kidney.

Its subcellular location is the golgi apparatus membrane. The catalysed reaction is 3-O-(beta-D-galactosyl-(1-&gt;3)-beta-D-galactosyl-(1-&gt;4)-beta-D-xylosyl)-L-seryl-[protein] + UDP-alpha-D-glucuronate = 3-O-(beta-D-GlcA-(1-&gt;3)-beta-D-Gal-(1-&gt;3)-beta-D-Gal-(1-&gt;4)-beta-D-Xyl)-L-seryl-[protein] + UDP + H(+). The protein operates within protein modification; protein glycosylation. Functionally, involved in the biosynthesis of L2/HNK-1 carbohydrate epitope on both glycolipids and glycoproteins. The chain is Galactosylgalactosylxylosylprotein 3-beta-glucuronosyltransferase 2 (B3gat2) from Mus musculus (Mouse).